The primary structure comprises 174 residues: Small ribosomal subunit protein uS5 (174 aa).

One can recognise an S5 DRBM domain in the interval 20–83 (IEDQLVAINR…EAGKKRMIKV (64 aa)).

The protein belongs to the universal ribosomal protein uS5 family. As to quaternary structure, part of the 30S ribosomal subunit. Contacts proteins S4 and S8.

In terms of biological role, with S4 and S12 plays an important role in translational accuracy. Its function is as follows. Located at the back of the 30S subunit body where it stabilizes the conformation of the head with respect to the body. In Lactobacillus gasseri (strain ATCC 33323 / DSM 20243 / BCRC 14619 / CIP 102991 / JCM 1131 / KCTC 3163 / NCIMB 11718 / NCTC 13722 / AM63), this protein is Small ribosomal subunit protein uS5.